The following is a 126-amino-acid chain: C-type natriuretic peptide (126 aa).

A signal peptide spans 1–23; sequence MHLSQLLACALLLALLSLRPSEA. The segment at 20–71 is disordered; the sequence is PSEAKPGAPPKVPRTPSGEEVAEPQAAGGGQKKGDKTPGGGGANLKDDRSRL. Residues 24–73 constitute a propeptide that is removed on maturation; the sequence is KPGAPPKVPRTPSGEEVAEPQAAGGGQKKGDKTPGGGGANLKDDRSRLLR. The segment covering 46–62 has biased composition (gly residues); that stretch reads AGGGQKKGDKTPGGGGA. C110 and C126 are oxidised to a cystine.

The protein belongs to the natriuretic peptide family. In terms of processing, degraded by IDE (in vitro).

Its subcellular location is the secreted. In terms of biological role, hormone which plays a role in endochondral ossification through regulation of cartilaginous growth plate chondrocytes proliferation and differentiation. May also be vasoactive and natriuretic. Acts by specifically binding and stimulating NPR2 to produce cGMP. Binds the clearance receptor NPR3. The sequence is that of C-type natriuretic peptide (NPPC) from Bos taurus (Bovine).